Consider the following 489-residue polypeptide: Nuclear distribution protein PAC1 (489 aa).

Residues 66–98 (STVLRLQKKIIDLENEISNLNNIINSSNSDNNG) are a coiled coil. WD repeat units lie at residues 119–158 (QCEN…NTIP), 164–205 (AHTR…RTLN), 206–246 (GHEH…SLKS), 249–291 (GHSE…GLAM), 328–368 (IPLE…IAPH), 389–428 (GHSS…ETGS), and 437–486 (GHDG…NSIK).

Belongs to the WD repeat LIS1/nudF family. In terms of assembly, self-associates. Interacts with NDL1 and dynein.

The protein localises to the cytoplasm. The protein resides in the cytoskeleton. Its subcellular location is the spindle pole. Positively regulates the activity of the minus-end directed microtubule motor protein dynein. Plays a central role in positioning the mitotic spindle at the bud neck during cell division. Targets cytoplasmic dynein to microtubule plus ends, thereby promoting dynein-mediated microtubule sliding along the bud cortex and consequently the movement of the mitotic spindle to the bud neck. In Candida dubliniensis (strain CD36 / ATCC MYA-646 / CBS 7987 / NCPF 3949 / NRRL Y-17841) (Yeast), this protein is Nuclear distribution protein PAC1.